The primary structure comprises 164 residues: Interferon gamma (164 aa).

Positions 1-19 (MTCQTYNLFVLSVIMIYYG) are cleaved as a signal peptide. N-linked (GlcNAc...) asparagine glycans are attached at residues Asn-42 and Asn-61.

It belongs to the type II (or gamma) interferon family. In terms of assembly, homodimer.

It localises to the secreted. Produced by lymphocytes activated by specific antigens or mitogens. IFN-gamma, in addition to having antiviral activity, has important immunoregulatory functions. It is a potent activator of macrophages, it has antiproliferative effects on transformed cells and it can potentiate the antiviral and antitumor effects of the type I interferons. This chain is Interferon gamma (IFNG), found in Coturnix japonica (Japanese quail).